We begin with the raw amino-acid sequence, 308 residues long: tRNA pseudouridine synthase B (308 aa).

Asp45 acts as the Nucleophile in catalysis.

Belongs to the pseudouridine synthase TruB family. Type 1 subfamily.

It catalyses the reaction uridine(55) in tRNA = pseudouridine(55) in tRNA. Its function is as follows. Responsible for synthesis of pseudouridine from uracil-55 in the psi GC loop of transfer RNAs. The protein is tRNA pseudouridine synthase B of Gloeothece citriformis (strain PCC 7424) (Cyanothece sp. (strain PCC 7424)).